The following is a 630-amino-acid chain: 1-deoxy-D-xylulose-5-phosphate synthase (630 aa).

Residues His72 and 113–115 each bind thiamine diphosphate; that span reads GHS. Asp144 serves as a coordination point for Mg(2+). Thiamine diphosphate contacts are provided by residues 145–146, Asn173, Tyr284, and Glu367; that span reads GA. Asn173 provides a ligand contact to Mg(2+).

The protein belongs to the transketolase family. DXPS subfamily. As to quaternary structure, homodimer. It depends on Mg(2+) as a cofactor. The cofactor is thiamine diphosphate.

It carries out the reaction D-glyceraldehyde 3-phosphate + pyruvate + H(+) = 1-deoxy-D-xylulose 5-phosphate + CO2. Its pathway is metabolic intermediate biosynthesis; 1-deoxy-D-xylulose 5-phosphate biosynthesis; 1-deoxy-D-xylulose 5-phosphate from D-glyceraldehyde 3-phosphate and pyruvate: step 1/1. In terms of biological role, catalyzes the acyloin condensation reaction between C atoms 2 and 3 of pyruvate and glyceraldehyde 3-phosphate to yield 1-deoxy-D-xylulose-5-phosphate (DXP). In Bacillus cereus (strain B4264), this protein is 1-deoxy-D-xylulose-5-phosphate synthase.